The chain runs to 462 residues: Phospho-2-dehydro-3-deoxyheptonate aldolase AroG (462 aa).

Mn(2+) is bound at residue Cys-87. Phosphoenolpyruvate is bound by residues Arg-126, 283-284, Lys-306, and Arg-337; that span reads ER. Residues His-369, Glu-411, and Asp-441 each contribute to the Mn(2+) site.

In terms of assembly, homodimer. Interacts with Rv0948c. The cofactor is Mn(2+). Co(2+) serves as cofactor. Requires Cd(2+) as cofactor.

The enzyme catalyses D-erythrose 4-phosphate + phosphoenolpyruvate + H2O = 7-phospho-2-dehydro-3-deoxy-D-arabino-heptonate + phosphate. It functions in the pathway metabolic intermediate biosynthesis; chorismate biosynthesis; chorismate from D-erythrose 4-phosphate and phosphoenolpyruvate: step 1/7. Feedback inhibited by tryptophan, tyrosine, phenylalanine and chorismate. Functionally, catalyzes an aldol-like condensation reaction between phosphoenolpyruvate (PEP) and D-erythrose 4-phosphate (E4P) to generate 3-deoxy-D-arabino-heptulosonate 7-phosphate (DAH7P) and inorganic phosphate. This chain is Phospho-2-dehydro-3-deoxyheptonate aldolase AroG (aroG), found in Mycobacterium tuberculosis (strain ATCC 25618 / H37Rv).